The chain runs to 865 residues: Alanine--tRNA ligase (865 aa).

His-568, His-572, Cys-670, and His-674 together coordinate Zn(2+).

This sequence belongs to the class-II aminoacyl-tRNA synthetase family. Zn(2+) is required as a cofactor.

It is found in the cytoplasm. It carries out the reaction tRNA(Ala) + L-alanine + ATP = L-alanyl-tRNA(Ala) + AMP + diphosphate. Functionally, catalyzes the attachment of alanine to tRNA(Ala) in a two-step reaction: alanine is first activated by ATP to form Ala-AMP and then transferred to the acceptor end of tRNA(Ala). Also edits incorrectly charged Ser-tRNA(Ala) and Gly-tRNA(Ala) via its editing domain. This is Alanine--tRNA ligase from Vibrio campbellii (strain ATCC BAA-1116).